We begin with the raw amino-acid sequence, 159 residues long: Serine-protein kinase RsbW (159 aa).

Belongs to the anti-sigma-factor family.

The catalysed reaction is L-seryl-[protein] + ATP = O-phospho-L-seryl-[protein] + ADP + H(+). It catalyses the reaction L-threonyl-[protein] + ATP = O-phospho-L-threonyl-[protein] + ADP + H(+). Its function is as follows. Negative regulator of sigma-B activity. Phosphorylates and inactivates its specific antagonist protein, RsbV. Upon phosphorylation of RsbV, RsbW is released and binds to sigma-B, thereby blocking its ability to form an RNA polymerase holoenzyme (E-sigma-B). This Staphylococcus aureus (strain MSSA476) protein is Serine-protein kinase RsbW.